The primary structure comprises 385 residues: Protein kup-1 (385 aa).

2 disordered regions span residues 1 to 20 (MDDELDYGSDHSIHGDVRED) and 326 to 385 (SLAS…PDEY). Basic and acidic residues-rich tracts occupy residues 8-20 (GSDHSIHGDVRED), 339-351 (RTDEKDYEKDDIV), and 364-385 (GRVERPIRERIQFPGREDPDEY).

The chain is Protein kup-1 (kup-1) from Caenorhabditis elegans.